A 349-amino-acid polypeptide reads, in one-letter code: Isopentenyl-diphosphate delta-isomerase (349 aa).

Substrate is bound at residue Arg9–Lys10. FMN is bound by residues Ala65 to Thr67, Ser95, and Asn124. Ser95–His97 contacts substrate. Gln154 is a binding site for substrate. Residue Glu155 coordinates Mg(2+). FMN contacts are provided by residues Lys186, Ser211, Thr216, Gly262–Arg264, and Ser283–Arg284.

It belongs to the IPP isomerase type 2 family. In terms of assembly, homooctamer. Dimer of tetramers. Requires FMN as cofactor. The cofactor is NADPH. Mg(2+) serves as cofactor.

It is found in the cytoplasm. The enzyme catalyses isopentenyl diphosphate = dimethylallyl diphosphate. Involved in the biosynthesis of isoprenoids. Catalyzes the 1,3-allylic rearrangement of the homoallylic substrate isopentenyl (IPP) to its allylic isomer, dimethylallyl diphosphate (DMAPP). This is Isopentenyl-diphosphate delta-isomerase from Staphylococcus aureus (strain USA300 / TCH1516).